Consider the following 148-residue polypeptide: MAESDWDTVTVLRKKGPTAAQAKSKQAILAAQRRGEDVETSKKWAAGQNKQHSITKNTAKLDRETEELHHDRVTLEVGKVIQRGRQSKGLTQKDLATKINEKPQVIADYESGRAIPNNQVLGKIERAIGLKLRGKDIGKPIEKGPKAK.

An N-acetylalanine modification is found at Ala2. Ser4 is modified (phosphoserine). Lys25 is subject to N6-methyllysine. Residues 34 to 67 are disordered; sequence RGEDVETSKKWAAGQNKQHSITKNTAKLDRETEE. Positions 37 to 113 are interaction with NR5A2, PPARG and NR1H3; that stretch reads DVETSKKWAA…QVIADYESGR (77 aa). Residues 48-58 are compositionally biased toward polar residues; sequence QNKQHSITKNT. The segment at 69-108 is interaction with TBP and NR5A1; it reads HHDRVTLEVGKVIQRGRQSKGLTQKDLATKINEKPQVIAD. Residues 81–88 carry the IQ motif motif; it reads IQRGRQSK. An HTH cro/C1-type domain is found at 81–135; that stretch reads IQRGRQSKGLTQKDLATKINEKPQVIADYESGRAIPNNQVLGKIERAIGLKLRGK. A DNA-binding region (H-T-H motif) is located at residues 92–111; sequence QKDLATKINEKPQVIADYES.

As to quaternary structure, interacts with TBP and the transcription factor IID (TFIID) complex, NR5A2, NR1H3 and PPARG. Interaction with TBP is regulated by phosphorylation. Binds NR5A1, ATF1, FOS and JUN via their conserved basic region. Binding to calmodulin is regulated by calcium and phosphorylation of the IQ motif. Phosphorylated. In terms of tissue distribution, expressed in brain, liver, kidney and heart (at protein level). Also expressed in testis.

It localises to the cytoplasm. The protein resides in the nucleus. Transcriptional coactivator stimulating NR5A1 and ligand-dependent NR1H3/LXRA and PPARG transcriptional activities. Enhances the DNA-binding activity of ATF1, ATF2, CREB1 and NR5A1. Regulates nitric oxid synthase activity probably by sequestering calmodulin in the cytoplasm. Might function in endothelial cells differentiation, hormone-induced cardiomyocytes hypertrophy and lipid metabolism. This Mus musculus (Mouse) protein is Endothelial differentiation-related factor 1 (Edf1).